Here is a 395-residue protein sequence, read N- to C-terminus: Cyclomarin C epoxidase CymV (395 aa).

It belongs to the cytochrome P450 family.

In terms of biological role, cytochrome P450; part of the gene cluster that mediates the biosynthesis of cyclic heptapeptides, known as cyclomarins and also of cyclic dipeptides, called cyclomarazines, which have both antimicrobial and cytotoxic effects. First, CymD catalyzes the reverse N-prenylation of monomeric L-tryptophan with dimethylallyl diphosphate (DMAPP) to form N-(1,1-dimethylallyl)-tryptophan (r-N-DMAT). The N-(1,1-dimethylallyl)-tryptophan produced by CymD is then combined with a range of standard and nonproteinogenic amino acid substrates to synthesize the peptides, a process that is probably catalyzed by the non-canonical nonribosomal peptide synthetase (NRPS), CymA. Other proteins in the cluster catalyze further modifications of the peptides including CymV which catalyzes the oxidation of olefinic cyclomarins and cyclomarazines to their respective epoxide derivatives. The protein is Cyclomarin C epoxidase CymV of Salinispora arenicola (strain CNS-205).